Reading from the N-terminus, the 182-residue chain is Lipid A acyltransferase PagP (182 aa).

The N-terminal stretch at 1 to 21 (MTQYFRALAFFLLLVPATAMA) is a signal peptide. The N-palmitoyl cysteine moiety is linked to residue Cys-22. Residue Cys-22 is the site of S-diacylglycerol cysteine attachment. Active-site residues include His-55, Asp-98, and Ser-99.

It belongs to the lipid A palmitoyltransferase family. In terms of assembly, homodimer.

The protein resides in the cell outer membrane. It carries out the reaction a lipid A + a 1,2-diacyl-sn-glycero-3-phosphocholine = a hepta-acyl lipid A + a 2-acyl-sn-glycero-3-phosphocholine. It catalyses the reaction a lipid IVA + a 1,2-diacyl-sn-glycero-3-phosphocholine = a lipid IVB + a 2-acyl-sn-glycero-3-phosphocholine. The catalysed reaction is a lipid IIA + a 1,2-diacyl-sn-glycero-3-phosphocholine = a lipid IIB + a 2-acyl-sn-glycero-3-phosphocholine. Its function is as follows. Transfers a fatty acid residue from the sn-1 position of a phospholipid to the N-linked hydroxyfatty acid chain on the proximal unit of lipid A or its precursors. The chain is Lipid A acyltransferase PagP from Bordetella parapertussis (strain 12822 / ATCC BAA-587 / NCTC 13253).